The sequence spans 469 residues: Acetyl-CoA decarbonylase/synthase complex subunit beta 2 (469 aa).

Positions 187, 190, 276, and 278 each coordinate [Ni-Fe-S] cluster.

It belongs to the CdhC family. As to quaternary structure, monomer. The ACDS complex is made up of alpha, epsilon, beta, gamma and delta chains with a probable stoichiometry of (alpha(2)epsilon(2))(4)-beta(8)-(gamma(1)delta(1))(8) (Potential). It depends on [Ni-Fe-S] cluster as a cofactor.

The enzyme catalyses Co(I)-[corrinoid Fe-S protein] + acetyl-CoA + H(+) = methyl-Co(III)-[corrinoid Fe-S protein] + CO + CoA. In terms of biological role, part of a complex that catalyzes the reversible cleavage of acetyl-CoA, allowing autotrophic growth from CO(2). The alpha-epsilon complex generates CO from CO(2), while the beta subunit (this protein) combines the CO with CoA and a methyl group to form acetyl-CoA. The methyl group, which is incorporated into acetyl-CoA, is transferred to the beta subunit by a corrinoid iron-sulfur protein (the gamma-delta complex). This chain is Acetyl-CoA decarbonylase/synthase complex subunit beta 2 (cdhC2), found in Methanocaldococcus jannaschii (strain ATCC 43067 / DSM 2661 / JAL-1 / JCM 10045 / NBRC 100440) (Methanococcus jannaschii).